The chain runs to 391 residues: Mannonate dehydratase (391 aa).

The segment at 334–359 is disordered; that stretch reads ERRRERDGGPRLPLRPDHGHHLLDDL.

This sequence belongs to the mannonate dehydratase family. Fe(2+) serves as cofactor. It depends on Mn(2+) as a cofactor.

The enzyme catalyses D-mannonate = 2-dehydro-3-deoxy-D-gluconate + H2O. It participates in carbohydrate metabolism; pentose and glucuronate interconversion. Catalyzes the dehydration of D-mannonate. This is Mannonate dehydratase from Chromohalobacter salexigens (strain ATCC BAA-138 / DSM 3043 / CIP 106854 / NCIMB 13768 / 1H11).